A 134-amino-acid chain; its full sequence is Ribonuclease VapC2 (134 aa).

Residues 3–124 form the PINc domain; the sequence is YMLDTNICVY…TNNIKEFKRI (122 aa). A Mg(2+)-binding site is contributed by aspartate 6.

It belongs to the PINc/VapC protein family. Forms complexes with VapB2; probably VapC2(4):VapB2(2) in the absence of DNA, and VapC2(4):VapB2(4) in the presence of DNA. Crystallizes as heterodimers with stoichiometry VapC2(4):VapB2(4) in the presence of its probable promoter DNA. The heterodimers are in contact via alternative VapC-VapC and VapB-VapB interactions. This subunit does not contact DNA. It depends on Mg(2+) as a cofactor.

In terms of biological role, toxic component of a type II toxin-antitoxin (TA) system. Has ssRNase activity. Upon expression in E.coli or S.cerevisiae inhibits growth in liquid culture; in S.cerevisiae its expression leads to apoptosis-like characteristics. Rapidly induces apoptosis (within 2 hours) upon microinjection into mouse fibroblasts (L929 line); pretreatment of cells with dexamethasone protects them. Probably contributes to host cell death if bacterial cell lysis occurs during host infection. Its toxic effect is neutralized by coexpression with cognate antitoxin VapB2, its RNase activity is partially inhibited in vitro by VapB2. The chain is Ribonuclease VapC2 from Rickettsia felis (strain ATCC VR-1525 / URRWXCal2) (Rickettsia azadi).